Consider the following 128-residue polypeptide: Elongation factor G (128 aa).

Belongs to the GTP-binding elongation factor family. EF-G/EF-2 subfamily.

The protein localises to the cytoplasm. In terms of biological role, catalyzes the GTP-dependent ribosomal translocation step during translation elongation. During this step, the ribosome changes from the pre-translocational (PRE) to the post-translocational (POST) state as the newly formed A-site-bound peptidyl-tRNA and P-site-bound deacylated tRNA move to the P and E sites, respectively. Catalyzes the coordinated movement of the two tRNA molecules, the mRNA and conformational changes in the ribosome. This Planobispora rosea protein is Elongation factor G (fusA).